A 300-amino-acid chain; its full sequence is Type II methyltransferase M.XycI (300 aa).

The segment at 109–129 is disordered; it reads RGYRAPDKKNPARAMDVRPDT. A compositionally biased stretch (basic and acidic residues) spans 112–127; it reads RAPDKKNPARAMDVRP.

Belongs to the N(4)/N(6)-methyltransferase family. N(4) subfamily.

It catalyses the reaction a 2'-deoxycytidine in DNA + S-adenosyl-L-methionine = an N(4)-methyl-2'-deoxycytidine in DNA + S-adenosyl-L-homocysteine + H(+). Functionally, a beta subtype methylase, recognizes the double-stranded sequence 5'-CCCGGG-3', methylates C-2 on both strands, and protects the DNA from cleavage by the XcyI endonuclease. The chain is Type II methyltransferase M.XycI (xcyIM) from Xanthomonas campestris pv. cyanopsidis.